Reading from the N-terminus, the 62-residue chain is MARYRRHSRSRSRSRYRRRRRRRSRHHNRRTYRRSRRHSRRRRGRRRGYSRRRYSRRGRRRY.

Residues 1 to 62 (MARYRRHSRS…RYSRRGRRRY (62 aa)) are disordered.

Belongs to the protamine P1 family. In terms of tissue distribution, testis.

Its subcellular location is the nucleus. The protein localises to the chromosome. In terms of biological role, protamines substitute for histones in the chromatin of sperm during the haploid phase of spermatogenesis. They compact sperm DNA into a highly condensed, stable and inactive complex. In Antechinomys laniger (Eastern jerboa marsupial), this protein is Sperm protamine P1 (PRM1).